Consider the following 347-residue polypeptide: Quinolinate synthase (347 aa).

Residues histidine 47 and serine 68 each contribute to the iminosuccinate site. Position 113 (cysteine 113) interacts with [4Fe-4S] cluster. Iminosuccinate-binding positions include 139-141 (YAN) and serine 156. [4Fe-4S] cluster is bound at residue cysteine 200. Residues 226–228 (HPE) and threonine 243 contribute to the iminosuccinate site. Position 297 (cysteine 297) interacts with [4Fe-4S] cluster.

Belongs to the quinolinate synthase family. Type 1 subfamily. The cofactor is [4Fe-4S] cluster.

It is found in the cytoplasm. It carries out the reaction iminosuccinate + dihydroxyacetone phosphate = quinolinate + phosphate + 2 H2O + H(+). The protein operates within cofactor biosynthesis; NAD(+) biosynthesis; quinolinate from iminoaspartate: step 1/1. In terms of biological role, catalyzes the condensation of iminoaspartate with dihydroxyacetone phosphate to form quinolinate. This chain is Quinolinate synthase, found in Escherichia coli O9:H4 (strain HS).